The sequence spans 585 residues: Arginine--tRNA ligase (585 aa).

Residues 131–141 (ANPTGPMHVGH) carry the 'HIGH' region motif.

Belongs to the class-I aminoacyl-tRNA synthetase family. As to quaternary structure, monomer.

Its subcellular location is the cytoplasm. The enzyme catalyses tRNA(Arg) + L-arginine + ATP = L-arginyl-tRNA(Arg) + AMP + diphosphate. This chain is Arginine--tRNA ligase, found in Bartonella bacilliformis (strain ATCC 35685 / KC583 / Herrer 020/F12,63).